A 175-amino-acid polypeptide reads, in one-letter code: Coagulogen (175 aa).

8 disulfide bridges follow: Cys8/Cys167, Cys10/Cys95, Cys60/Cys161, Cys65/Cys121, Cys75/Cys168, Cys88/Cys140, Cys127/Cys170, and Cys134/Cys172.

This sequence belongs to the coagulin family. In terms of assembly, coagulogen is cleaved after Arg-18 and Arg-46 by a clotting enzyme contained in the hemocyte and activated by a bacterial endotoxin (lipopolysaccharide). This cleavage releases the peptide C and leaves 2 chains of coagulin, A and B, linked by two disulfide bonds. Coagulin molecules interlink to form a gel. As to expression, hemolymph.

Its subcellular location is the secreted. Coagulogen is a gel-forming protein of hemolymph; it hinders the spread of invaders by immobilizing them. The protein is Coagulogen of Carcinoscorpius rotundicauda (Mangrove horseshoe crab).